A 135-amino-acid polypeptide reads, in one-letter code: Small ribosomal subunit protein uS12 (135 aa).

A disordered region spans residues 1–23 (MPTINQLVRKGRHSKTTKSDSPA). 3-methylthioaspartic acid is present on Asp102.

The protein belongs to the universal ribosomal protein uS12 family. Part of the 30S ribosomal subunit. Contacts proteins S8 and S17. May interact with IF1 in the 30S initiation complex.

With S4 and S5 plays an important role in translational accuracy. Functionally, interacts with and stabilizes bases of the 16S rRNA that are involved in tRNA selection in the A site and with the mRNA backbone. Located at the interface of the 30S and 50S subunits, it traverses the body of the 30S subunit contacting proteins on the other side and probably holding the rRNA structure together. The combined cluster of proteins S8, S12 and S17 appears to hold together the shoulder and platform of the 30S subunit. The polypeptide is Small ribosomal subunit protein uS12 (Lactobacillus gasseri (strain ATCC 33323 / DSM 20243 / BCRC 14619 / CIP 102991 / JCM 1131 / KCTC 3163 / NCIMB 11718 / NCTC 13722 / AM63)).